Reading from the N-terminus, the 305-residue chain is Cytoplasmic envelopment protein 1 (305 aa).

The protein belongs to the herpesviridae cytoplasmic envelopment protein 1 family.

The protein localises to the virion. It localises to the virion tegument. The protein resides in the host cytoplasm. It is found in the host Golgi apparatus. Plays a critical role in cytoplasmic virus egress. Participates in the final step of tegumentation and envelope acquisition within the host cytoplasm. The chain is Cytoplasmic envelopment protein 1 (MDV019) from Gallus gallus (Chicken).